A 359-amino-acid chain; its full sequence is MILNSSTEDGIKRIQDDCPKAGRHNYIFIMIPTLYSIIFVVGLFGNSLVVIVIYFYMKLKTVASVFLLNLALADLCFLLTLPLWAVYTAMEYRWPFGNYLCKIASGSVSFNLYASVFLLTCLSIDRYLAIVHPMKSRLRRTMLVAKVTCIIIWLLAGLASLPTIIHRNVFFIENTNITVCAFHYESQNSTLPVGLGLTKNILGFLFPFLIILTSYTLIWKTLKKAYEIQKNKPRKDDIFKIILAIVLFFFFSWVPHQIFTFMDVLIQLGLIRDCKIEDIVDTAMPITICLAYFNNCLNPPFYGFLGKKFKKYFLQLLKYIPPKAKSHSNLSTKMSTLSYRPSENGNSSTKKPAPCTEVE.

The Extracellular portion of the chain corresponds to 1–25 (MILNSSTEDGIKRIQDDCPKAGRHN). Residue Asn4 is glycosylated (N-linked (GlcNAc...) asparagine). Residues Gln15 and Asp17 each contribute to the angiotensin II site. Cystine bridges form between Cys18/Cys274 and Cys101/Cys180. The helical transmembrane segment at 26 to 55 (YIFIMIPTLYSIIFVVGLFGNSLVVIVIYF) threads the bilayer. At 56–61 (YMKLKT) the chain is on the cytoplasmic side. A helical transmembrane segment spans residues 62-89 (VASVFLLNLALADLCFLLTLPLWAVYTA). Residues 90-98 (MEYRWPFGN) lie on the Extracellular side of the membrane. A helical transmembrane segment spans residues 99–125 (YLCKIASGSVSFNLYASVFLLTCLSID). Residues 126–141 (RYLAIVHPMKSRLRRT) are Cytoplasmic-facing. A helical transmembrane segment spans residues 142–165 (MLVAKVTCIIIWLLAGLASLPTII). Over 166–190 (HRNVFFIENTNITVCAFHYESQNST) the chain is Extracellular. Arg167 is an angiotensin II binding site. The N-linked (GlcNAc...) asparagine glycan is linked to Asn176. Residues Phe182, His183, and Tyr184 each contribute to the angiotensin II site. N-linked (GlcNAc...) asparagine glycosylation occurs at Asn188. A helical membrane pass occupies residues 191 to 216 (LPVGLGLTKNILGFLFPFLIILTSYT). Residue Lys199 coordinates angiotensin II. Residues 217-239 (LIWKTLKKAYEIQKNKPRKDDIF) lie on the Cytoplasmic side of the membrane. A helical membrane pass occupies residues 240-268 (KIILAIVLFFFFSWVPHQIFTFMDVLIQL). At 269–278 (GLIRDCKIED) the chain is on the extracellular side. A helical transmembrane segment spans residues 279–304 (IVDTAMPITICLAYFNNCLNPPFYGF). Topologically, residues 305 to 359 (LGKKFKKYFLQLLKYIPPKAKSHSNLSTKMSTLSYRPSENGNSSTKKPAPCTEVE) are cytoplasmic. A compositionally biased stretch (polar residues) spans 335 to 350 (STLSYRPSENGNSSTK). The segment at 335-359 (STLSYRPSENGNSSTKKPAPCTEVE) is disordered. Cys355 carries S-palmitoyl cysteine lipidation.

It belongs to the G-protein coupled receptor 1 family. In terms of assembly, interacts with MAS1. Interacts with ARRB1. Interacts with FLNA (via filamin repeat 21); increases PKA-mediated phosphorylation of FLNA. C-terminal Ser or Thr residues may be phosphorylated.

It localises to the cell membrane. Functionally, receptor for angiotensin II, a vasoconstricting peptide, which acts as a key regulator of blood pressure and sodium retention by the kidney. The activated receptor in turn couples to G-alpha proteins G(q) (GNAQ, GNA11, GNA14 or GNA15) and thus activates phospholipase C and increases the cytosolic Ca(2+) concentrations, which in turn triggers cellular responses such as stimulation of protein kinase C. This Ovis aries (Sheep) protein is Type-1 angiotensin II receptor (AGTR1).